Consider the following 210-residue polypeptide: Ribosomal RNA large subunit methyltransferase E (210 aa).

S-adenosyl-L-methionine-binding residues include Gly67, Trp69, Asp87, Asp103, and Asp128. Catalysis depends on Lys168, which acts as the Proton acceptor.

Belongs to the class I-like SAM-binding methyltransferase superfamily. RNA methyltransferase RlmE family.

Its subcellular location is the cytoplasm. The catalysed reaction is uridine(2552) in 23S rRNA + S-adenosyl-L-methionine = 2'-O-methyluridine(2552) in 23S rRNA + S-adenosyl-L-homocysteine + H(+). Functionally, specifically methylates the uridine in position 2552 of 23S rRNA at the 2'-O position of the ribose in the fully assembled 50S ribosomal subunit. The protein is Ribosomal RNA large subunit methyltransferase E of Psychrobacter sp. (strain PRwf-1).